A 198-amino-acid polypeptide reads, in one-letter code: Na(+)-translocating NADH-quinone reductase subunit E (198 aa).

The next 6 membrane-spanning stretches (helical) occupy residues 11 to 31 (SVFIENMALSFFLGMCTFLAV), 35 to 55 (VSTSFGLGIAVIVVLGIAVPV), 77 to 97 (FLNFITFIGVIAALVQILEMF), 110 to 130 (GIFLPLITVNCAIFGGVSFMV), 140 to 160 (VVYGIGAGTGWMLAIVALAGL), and 176 to 196 (LGITFITVGLMALGFMSFSGI).

This sequence belongs to the NqrDE/RnfAE family. Composed of six subunits; NqrA, NqrB, NqrC, NqrD, NqrE and NqrF.

It localises to the cell inner membrane. It carries out the reaction a ubiquinone + n Na(+)(in) + NADH + H(+) = a ubiquinol + n Na(+)(out) + NAD(+). Its function is as follows. NQR complex catalyzes the reduction of ubiquinone-1 to ubiquinol by two successive reactions, coupled with the transport of Na(+) ions from the cytoplasm to the periplasm. NqrA to NqrE are probably involved in the second step, the conversion of ubisemiquinone to ubiquinol. The protein is Na(+)-translocating NADH-quinone reductase subunit E of Actinobacillus succinogenes (strain ATCC 55618 / DSM 22257 / CCUG 43843 / 130Z).